Consider the following 412-residue polypeptide: Transforming growth factor beta-3 proprotein (412 aa).

A signal peptide spans 1–23 (MKMHLQRALVVLALLNFATVSLS). Residues asparagine 74, asparagine 135, and asparagine 142 are each glycosylated (N-linked (GlcNAc...) asparagine). The Cell attachment site motif lies at 261 to 263 (RGD). Glutamine 293 is subject to N5-methylglutamine. Disulfide bonds link cysteine 307-cysteine 316, cysteine 315-cysteine 378, cysteine 344-cysteine 409, and cysteine 348-cysteine 411.

The protein belongs to the TGF-beta family. As to quaternary structure, interacts with ASPN. Latency-associated peptide: Homodimer; disulfide-linked. Latency-associated peptide: Interacts with Transforming growth factor beta-3 (TGF-beta-3) chain; interaction is non-covalent and maintains (TGF-beta-3) in a latent state. Latency-associated peptide: Interacts with LRRC32/GARP; leading to regulate activation of TGF-beta-3 and promote epithelial fusion during palate development. Latency-associated peptide: Interacts (via cell attachment site) with integrins, leading to release of the active TGF-beta-3. Transforming growth factor beta-3: Homodimer; disulfide-linked. Transforming growth factor beta-3: Interacts with TGF-beta receptors (TGFBR1 and TGFBR2), leading to signal transduction. In terms of processing, transforming growth factor beta-3 proprotein: The precursor proprotein is cleaved in the Golgi apparatus to form Transforming growth factor beta-3 (TGF-beta-3) and Latency-associated peptide (LAP) chains, which remain non-covalently linked, rendering TGF-beta-3 inactive. Methylated at Gln-293 by N6AMT1.

The protein localises to the secreted. It is found in the extracellular space. Its subcellular location is the extracellular matrix. In terms of biological role, transforming growth factor beta-3 proprotein: Precursor of the Latency-associated peptide (LAP) and Transforming growth factor beta-3 (TGF-beta-3) chains, which constitute the regulatory and active subunit of TGF-beta-3, respectively. Required to maintain the Transforming growth factor beta-3 (TGF-beta-3) chain in a latent state during storage in extracellular matrix. Associates non-covalently with TGF-beta-3 and regulates its activation via interaction with 'milieu molecules', such as LTBP1 and LRRC32/GARP, that control activation of TGF-beta-3. Interaction with integrins results in distortion of the Latency-associated peptide chain and subsequent release of the active TGF-beta-3. Functionally, transforming growth factor beta-3: Multifunctional protein that regulates embryogenesis and cell differentiation and is required in various processes such as secondary palate development. Activation into mature form follows different steps: following cleavage of the proprotein in the Golgi apparatus, Latency-associated peptide (LAP) and Transforming growth factor beta-3 (TGF-beta-3) chains remain non-covalently linked rendering TGF-beta-3 inactive during storage in extracellular matrix. At the same time, LAP chain interacts with 'milieu molecules', such as LTBP1 and LRRC32/GARP that control activation of TGF-beta-3 and maintain it in a latent state during storage in extracellular milieus. TGF-beta-3 is released from LAP by integrins: integrin-binding results in distortion of the LAP chain and subsequent release of the active TGF-beta-3. Once activated following release of LAP, TGF-beta-3 acts by binding to TGF-beta receptors (TGFBR1 and TGFBR2), which transduce signal. This Homo sapiens (Human) protein is Transforming growth factor beta-3 proprotein (TGFB3).